A 418-amino-acid polypeptide reads, in one-letter code: NADH-quinone oxidoreductase subunit D (418 aa).

Belongs to the complex I 49 kDa subunit family. NDH-1 is composed of 14 different subunits. Subunits NuoB, C, D, E, F, and G constitute the peripheral sector of the complex.

Its subcellular location is the cell inner membrane. It catalyses the reaction a quinone + NADH + 5 H(+)(in) = a quinol + NAD(+) + 4 H(+)(out). NDH-1 shuttles electrons from NADH, via FMN and iron-sulfur (Fe-S) centers, to quinones in the respiratory chain. The immediate electron acceptor for the enzyme in this species is believed to be ubiquinone. Couples the redox reaction to proton translocation (for every two electrons transferred, four hydrogen ions are translocated across the cytoplasmic membrane), and thus conserves the redox energy in a proton gradient. The chain is NADH-quinone oxidoreductase subunit D from Methylacidiphilum infernorum (isolate V4) (Methylokorus infernorum (strain V4)).